The primary structure comprises 188 residues: dCTP deaminase (188 aa).

DCTP is bound by residues 111–116 (KSTYAR), 135–137 (TLE), Gln-156, Tyr-170, and Gln-180. The active-site Proton donor/acceptor is Glu-137.

Belongs to the dCTP deaminase family. As to quaternary structure, homotrimer.

It carries out the reaction dCTP + H2O + H(+) = dUTP + NH4(+). It participates in pyrimidine metabolism; dUMP biosynthesis; dUMP from dCTP (dUTP route): step 1/2. Catalyzes the deamination of dCTP to dUTP. This is dCTP deaminase from Nitrosococcus oceani (strain ATCC 19707 / BCRC 17464 / JCM 30415 / NCIMB 11848 / C-107).